The sequence spans 40 residues: Photosystem II reaction center protein T (40 aa).

A helical membrane pass occupies residues 3 to 23; the sequence is ALVYTFLLVGTLGIIFFAIFF.

Belongs to the PsbT family. PSII is composed of 1 copy each of membrane proteins PsbA, PsbB, PsbC, PsbD, PsbE, PsbF, PsbH, PsbI, PsbJ, PsbK, PsbL, PsbM, PsbT, PsbY, PsbZ, Psb30/Ycf12, at least 3 peripheral proteins of the oxygen-evolving complex and a large number of cofactors. It forms dimeric complexes.

It localises to the plastid. The protein resides in the chloroplast thylakoid membrane. In terms of biological role, found at the monomer-monomer interface of the photosystem II (PS II) dimer, plays a role in assembly and dimerization of PSII. PSII is a light-driven water plastoquinone oxidoreductase, using light energy to abstract electrons from H(2)O, generating a proton gradient subsequently used for ATP formation. The chain is Photosystem II reaction center protein T from Anthoceros angustus (Hornwort).